We begin with the raw amino-acid sequence, 216 residues long: Octanoyltransferase (216 aa).

Residues 31 to 205 (STTRDEVWLV…ELVTLLDYEQ (175 aa)) form the BPL/LPL catalytic domain. Substrate is bound by residues 70–77 (RGGQVTYH), 137–139 (SLG), and 150–152 (GLA). Cys-168 serves as the catalytic Acyl-thioester intermediate.

This sequence belongs to the LipB family.

It localises to the cytoplasm. It carries out the reaction octanoyl-[ACP] + L-lysyl-[protein] = N(6)-octanoyl-L-lysyl-[protein] + holo-[ACP] + H(+). The protein operates within protein modification; protein lipoylation via endogenous pathway; protein N(6)-(lipoyl)lysine from octanoyl-[acyl-carrier-protein]: step 1/2. Catalyzes the transfer of endogenously produced octanoic acid from octanoyl-acyl-carrier-protein onto the lipoyl domains of lipoate-dependent enzymes. Lipoyl-ACP can also act as a substrate although octanoyl-ACP is likely to be the physiological substrate. This Vibrio cholerae serotype O1 (strain ATCC 39541 / Classical Ogawa 395 / O395) protein is Octanoyltransferase.